A 311-amino-acid chain; its full sequence is Protoheme IX farnesyltransferase (311 aa).

9 helical membrane passes run 33 to 53 (VVML…PSPA), 55 to 75 (LWLL…AAAV), 104 to 124 (NALL…SSFI), 127 to 147 (LTAW…TLFL), 155 to 175 (IVIG…AVTG), 181 to 201 (GLLL…ALAL), 228 to 248 (IVLY…TRMM), 252 to 272 (YLVG…KLLV), and 287 to 307 (IIYL…FPIP).

It belongs to the UbiA prenyltransferase family. Protoheme IX farnesyltransferase subfamily.

The protein resides in the cell inner membrane. The enzyme catalyses heme b + (2E,6E)-farnesyl diphosphate + H2O = Fe(II)-heme o + diphosphate. It participates in porphyrin-containing compound metabolism; heme O biosynthesis; heme O from protoheme: step 1/1. Converts heme B (protoheme IX) to heme O by substitution of the vinyl group on carbon 2 of heme B porphyrin ring with a hydroxyethyl farnesyl side group. The protein is Protoheme IX farnesyltransferase of Teredinibacter turnerae (strain ATCC 39867 / T7901).